Here is a 231-residue protein sequence, read N- to C-terminus: Sec-independent protein translocase protein TatB (231 aa).

Residues 1 to 21 traverse the membrane as a helical segment; it reads MFDIGFSELLLFGVIALIVLG. The segment at 77–168 is disordered; that stretch reads MRREMAEMRG…SLKTDFNDNA (92 aa). The segment covering 101 to 111 has biased composition (basic and acidic residues); it reads ASRDLVDDAKP. The span at 148 to 157 shows a compositional bias: polar residues; it reads SEQPSAQGDN.

This sequence belongs to the TatB family. In terms of assembly, the Tat system comprises two distinct complexes: a TatABC complex, containing multiple copies of TatA, TatB and TatC subunits, and a separate TatA complex, containing only TatA subunits. Substrates initially bind to the TatABC complex, which probably triggers association of the separate TatA complex to form the active translocon.

It is found in the cell inner membrane. In terms of biological role, part of the twin-arginine translocation (Tat) system that transports large folded proteins containing a characteristic twin-arginine motif in their signal peptide across membranes. Together with TatC, TatB is part of a receptor directly interacting with Tat signal peptides. TatB may form an oligomeric binding site that transiently accommodates folded Tat precursor proteins before their translocation. This Psychrobacter cryohalolentis (strain ATCC BAA-1226 / DSM 17306 / VKM B-2378 / K5) protein is Sec-independent protein translocase protein TatB.